A 457-amino-acid polypeptide reads, in one-letter code: Secreted effector kinase SteC (457 aa).

Lys-256 lines the ATP pocket.

Belongs to the protein kinase superfamily. Autophosphorylated.

It localises to the secreted. It is found in the host cytoplasm. In terms of biological role, effector proteins function to alter host cell physiology and promote bacterial survival in host tissues. This protein is a kinase, which is required for SPI-2 T3SS-dependent F-actin meshwork formation in infected host cells. In Salmonella typhimurium (strain LT2 / SGSC1412 / ATCC 700720), this protein is Secreted effector kinase SteC (steC).